A 161-amino-acid polypeptide reads, in one-letter code: Putative 4-hydroxy-4-methyl-2-oxoglutarate aldolase (161 aa).

Substrate-binding positions include 78–81 (GDVI) and R100. Residue D101 participates in a divalent metal cation binding.

Belongs to the class II aldolase/RraA-like family. In terms of assembly, homotrimer. Requires a divalent metal cation as cofactor.

It catalyses the reaction 4-hydroxy-4-methyl-2-oxoglutarate = 2 pyruvate. The enzyme catalyses oxaloacetate + H(+) = pyruvate + CO2. Catalyzes the aldol cleavage of 4-hydroxy-4-methyl-2-oxoglutarate (HMG) into 2 molecules of pyruvate. Also contains a secondary oxaloacetate (OAA) decarboxylase activity due to the common pyruvate enolate transition state formed following C-C bond cleavage in the retro-aldol and decarboxylation reactions. This Mycobacterium avium (strain 104) protein is Putative 4-hydroxy-4-methyl-2-oxoglutarate aldolase.